Here is a 79-residue protein sequence, read N- to C-terminus: Translational regulator CsrA (79 aa).

Belongs to the CsrA/RsmA family. As to quaternary structure, homodimer; the beta-strands of each monomer intercalate to form a hydrophobic core, while the alpha-helices form wings that extend away from the core.

It localises to the cytoplasm. In terms of biological role, a translational regulator that binds mRNA to regulate translation initiation and/or mRNA stability. Usually binds in the 5'-UTR at or near the Shine-Dalgarno sequence preventing ribosome-binding, thus repressing translation. Its main target seems to be the major flagellin gene, while its function is anatagonized by FliW. This is Translational regulator CsrA from Maridesulfovibrio salexigens (strain ATCC 14822 / DSM 2638 / NCIMB 8403 / VKM B-1763) (Desulfovibrio salexigens).